The chain runs to 1036 residues: Potassium-transporting ATPase alpha chain 2 (1036 aa).

Residues 1 to 50 are disordered; the sequence is MRRKTEIYSVELNGTKDVKPADQRDDKKFKGAKNKDLEPNKSHEKEELKK. The Cytoplasmic segment spans residues 1 to 99; it reads MRRKTEIYSV…PNTLTPPKQT (99 aa). The segment covering 14–50 has biased composition (basic and acidic residues); sequence GTKDVKPADQRDDKKFKGAKNKDLEPNKSHEKEELKK. Residues 100–120 traverse the membrane as a helical segment; the sequence is PEIIKFLKQMVGGFSILLWIG. At 121 to 143 the chain is on the lumenal side; sequence AALCWIAFVIQYVNNSASLDNVY. Residues 144 to 164 traverse the membrane as a helical segment; the sequence is LGAILVLVVILTGIFAYYQEA. Topologically, residues 165–300 are cytoplasmic; that stretch reads KSTNIMASFS…SEKTPIAIEI (136 aa). The helical transmembrane segment at 301–320 threads the bilayer; it reads EHFVHIVAGVAVSIDIIFFI. The Lumenal segment spans residues 321–332; the sequence is TAVCMKYYVLDA. The chain crosses the membrane as a helical span at residues 333–350; it reads IIFLISIIVANVPEGLLA. Topologically, residues 351 to 784 are cytoplasmic; sequence TVTVTLSLTA…EEGRLIFDNL (434 aa). Catalysis depends on D388, which acts as the 4-aspartylphosphate intermediate. The Mg(2+) site is built by D729 and D733. Residues 785-804 form a helical membrane-spanning segment; that stretch reads KKTIAYTLTKNIAELCPFLI. The Lumenal segment spans residues 805-814; it reads YIVAGLPLPI. Residues 815-835 traverse the membrane as a helical segment; that stretch reads GTITILFIDLGTDIIPSIALA. Residues 836–855 are Cytoplasmic-facing; the sequence is YEKAESDIMNRKPRHKKKDR. The chain crosses the membrane as a helical span at residues 856–878; that stretch reads LVNTQLAIYSYLHIGLMQALGGF. The Lumenal portion of the chain corresponds to 879 to 930; sequence LVYFTVYAQQGFWPTSLINLRVAWETDDINDLEDSYGQEWTRYQRKYLEWTG. Residues 931–950 form a helical membrane-spanning segment; that stretch reads STAFFVAIMIQQIADLIIRK. Over 951-964 the chain is Cytoplasmic; that stretch reads TRRNSIFQQGLFRN. S955 is modified (phosphoserine; by PKA). A helical transmembrane segment spans residues 965–983; that stretch reads KVIWVGIASQVIVALILSY. Residues 984-998 are Lumenal-facing; that stretch reads GLGSVPALSFTMLRV. Residues 999–1019 traverse the membrane as a helical segment; the sequence is QYWFVAVPHAILIWVYDEMRK. Over 1020-1036 the chain is Cytoplasmic; that stretch reads LFIRLYPGSWWDKNMYY.

The protein belongs to the cation transport ATPase (P-type) (TC 3.A.3) family. Type IIC subfamily. The ATPase pump is composed of a catalytic alpha subunit and an auxiliary non-catalytic beta subunit. The alpha subunit pairs with the beta subunit of gastric H(+)/K(+) ATPase ATP4B or the beta subunit of Na(+)/K(+) ATPases ATP1B1 and ATP1B3; this interaction is required for the formation of a functionally active pump and its targeting at the plasma membrane. In terms of tissue distribution, expressed at high levels in distal colon, coagulating and preputial glands; at much lower levels in proximal colon, kidney, uterus, brain, placenta and lung; and at trace levels in heart and forestomach. Expressed in distal colon epithelium (at protein level). Expressed in anterior prostate (at protein level).

It is found in the apical cell membrane. It carries out the reaction K(+)(out) + ATP + H2O + H(+)(in) = K(+)(in) + ADP + phosphate + 2 H(+)(out). It catalyses the reaction K(+)(out) + Na(+)(in) + ATP + H2O = K(+)(in) + Na(+)(out) + ADP + phosphate + H(+). Its activity is regulated as follows. Up-regulated by K(+) ions in a dose-dependent way. Functionally, the catalytic subunit of a H(+)/K(+) ATPase and/or Na(+)/K(+) ATPase pump which transports K(+) ions in exchange for Na(+) and/or H(+) ions across the apical membrane of epithelial cells. Uses ATP as an energy source to pump K(+) ions into the cell while transporting Na(+) and/or H(+) ions to the extracellular compartment. Involved in the maintenance of electrolyte homeostasis through K(+) ion absorption in kidney and colon. In the airway epithelium, may play a primary role in mucus acidification regulating its viscosity and clearance. This is Potassium-transporting ATPase alpha chain 2 (Atp12a) from Rattus norvegicus (Rat).